The primary structure comprises 340 residues: Cytosolic Fe-S cluster assembly factor NBP35 (340 aa).

The interval M1–D41 is disordered. The segment covering K11–P30 has biased composition (basic and acidic residues). 4 residues coordinate [4Fe-4S] cluster: C29, C43, C46, and C52. G82 to S89 provides a ligand contact to ATP. C255 and C258 together coordinate [4Fe-4S] cluster.

It belongs to the Mrp/NBP35 ATP-binding proteins family. NUBP1/NBP35 subfamily. In terms of assembly, heterotetramer of 2 NBP35 and 2 CFD1 chains. [4Fe-4S] cluster serves as cofactor.

The protein resides in the cytoplasm. It is found in the nucleus. Its function is as follows. Component of the cytosolic iron-sulfur (Fe/S) protein assembly (CIA) machinery. Required for maturation of extramitochondrial Fe-S proteins. The NBP35-CFD1 heterotetramer forms a Fe-S scaffold complex, mediating the de novo assembly of an Fe-S cluster and its transfer to target apoproteins. Required for biogenesis and export of both ribosomal subunits, which may reflect a role in assembly of the Fe/S clusters in RLI1, a protein which performs rRNA processing and ribosome export. In Yarrowia lipolytica (strain CLIB 122 / E 150) (Yeast), this protein is Cytosolic Fe-S cluster assembly factor NBP35.